Consider the following 548-residue polypeptide: Frizzled-7-B (548 aa).

The N-terminal stretch at 1 to 18 (MLAPVSLLFCLFLQLCPS) is a signal peptide. Over 19 to 230 (AQQYHGEKGI…EEEVRFARLW (212 aa)) the chain is Extracellular. Positions 31–150 (PDHGFCQPIS…HGAGEICVGQ (120 aa)) constitute an FZ domain. 5 cysteine pairs are disulfide-bonded: C36-C97, C44-C90, C81-C118, C107-C147, and C111-C135. A glycan (N-linked (GlcNAc...) asparagine) is linked at N50. The N-linked (GlcNAc...) asparagine glycan is linked to N151. The chain crosses the membrane as a helical span at residues 231–251 (VGIWAILCGISTLFTVLTYLV). The Cytoplasmic portion of the chain corresponds to 252–262 (DMRRFSYPERP). The helical transmembrane segment at 263–283 (IIFLSGCYFMVAVAYTAGFLL) threads the bilayer. Topologically, residues 284–311 (EERAVCVERFSEDSYRTVAQGTKKEGCT) are extracellular. Residues 312-332 (ILFMILYFFGMASSIWWVILA) form a helical membrane-spanning segment. At 333 to 353 (LTWFLSAGMKWGHEAIEANSQ) the chain is on the cytoplasmic side. A helical transmembrane segment spans residues 354-374 (YFHLAAWAVPAVKTITILAMG). The Extracellular segment spans residues 375–397 (QVDGDVLSGVCYVGINSVDSLRG). Residues 398–418 (FVLAPLFVYLFLGTSFLLAGF) traverse the membrane as a helical segment. Residues 419-444 (VSLFRIRTIMKHDGTKTEKLEKLMVR) lie on the Cytoplasmic side of the membrane. Residues 445-465 (IGVFSVMYTVPATIVLACYFY) form a helical membrane-spanning segment. Over 466-502 (EQAFRDTWEKTWLVHTCKGYAVPCPNYNFAPMSPDFT) the chain is Extracellular. A helical membrane pass occupies residues 503 to 523 (VFMIKYLMTMIVGITSSFWIW). The Cytoplasmic segment spans residues 524–548 (SGKTLQSWRRFYHRLGNGSKGETAV). The Lys-Thr-X-X-X-Trp motif, mediates interaction with the PDZ domain of Dvl family members motif lies at 526–531 (KTLQSW). Residues 546–548 (TAV) carry the PDZ-binding motif.

Belongs to the G-protein coupled receptor Fz/Smo family. In terms of assembly, interacts with wnt11 and sdc4. The extracellular domain interacts with the extracellular domain of pcdh8/papc. Interacts (via C-terminus) with dvl1 (via PDZ domain). As to expression, during gastrulation, broadly expressed on the dorsal side of the embryo in deep mesodermal cells surrounding the blastopore lip and in presumptive anterior neuroectoderm. During neurulation, localized to the cranial neural crest and heart field where expression is retained at later stages in addition to new areas of expression in the neural tube, pronephros and tailbud. At tailbud stage, expressed in the pronephric duct, and broad head expression becomes more restricted to the hindbrain. In tadpoles, strongly expressed in the eye and the pericardium and myocardium of the developing heart.

It localises to the cell membrane. The protein resides in the endosome membrane. Functionally, receptor for Wnt proteins. Acts in both canonical and non-canonical Wnt pathways. Although different papers report differing Wnt preferences, wnt5a, wnt8b and wnt11 have been proposed as synergists. In the canonical Wnt pathway, acts via beta-catenin to promote the expression of the dorsal genes siamois, twin and nodal3 and to establish the dorsal axis of the embryo and induce dorsal mesoderm formation. In a non-canonical Wnt/planar cell polarity (PCP) pathway, acts with sdc4 and dvl2/dsh to regulate convergent extension cell movements during gastrulation. Triggers phosphorylation of dvl2/dsh and its translocation to the plasma membrane. In a third branch of Wnt signaling, acts in a non-canonical pathway via trimeric G proteins, and independently of dvl2/dsh, to recruit protein kinase C (PKC) to the membrane and thus activate PKC. PKC signaling controls cell sorting and tissue separation during gastrulation. The chain is Frizzled-7-B (fzd7-b) from Xenopus laevis (African clawed frog).